The sequence spans 458 residues: Argininosuccinate lyase (458 aa).

It belongs to the lyase 1 family. Argininosuccinate lyase subfamily.

The protein resides in the cytoplasm. The enzyme catalyses 2-(N(omega)-L-arginino)succinate = fumarate + L-arginine. Its pathway is amino-acid biosynthesis; L-arginine biosynthesis; L-arginine from L-ornithine and carbamoyl phosphate: step 3/3. In Salmonella choleraesuis (strain SC-B67), this protein is Argininosuccinate lyase.